The chain runs to 210 residues: Glycerol-3-phosphate acyltransferase (210 aa).

Helical transmembrane passes span 8 to 28 (LILL…LLLT), 56 to 76 (GLAA…VLIA), 87 to 107 (TMAV…WLGF), 119 to 139 (TIWV…LLVA), 144 to 164 (ISSA…VLLS), and 165 to 185 (GRPL…LIWA).

It belongs to the PlsY family. Probably interacts with PlsX.

The protein resides in the cell inner membrane. It catalyses the reaction an acyl phosphate + sn-glycerol 3-phosphate = a 1-acyl-sn-glycero-3-phosphate + phosphate. The protein operates within lipid metabolism; phospholipid metabolism. Functionally, catalyzes the transfer of an acyl group from acyl-phosphate (acyl-PO(4)) to glycerol-3-phosphate (G3P) to form lysophosphatidic acid (LPA). This enzyme utilizes acyl-phosphate as fatty acyl donor, but not acyl-CoA or acyl-ACP. The sequence is that of Glycerol-3-phosphate acyltransferase from Gluconobacter oxydans (strain 621H) (Gluconobacter suboxydans).